We begin with the raw amino-acid sequence, 197 residues long: Probable GTP-binding protein EngB (197 aa).

Residues 22–197 (TGVEVAFAGR…FKEKLDTWYQ (176 aa)) form the EngB-type G domain. Residues 30–37 (GRSNAGKS), 57–61 (GRTQL), 75–78 (DLPG), 142–145 (TKAD), and 177–179 (FSS) contribute to the GTP site. Mg(2+) contacts are provided by Ser-37 and Thr-59.

Belongs to the TRAFAC class TrmE-Era-EngA-EngB-Septin-like GTPase superfamily. EngB GTPase family. Mg(2+) serves as cofactor.

In terms of biological role, necessary for normal cell division and for the maintenance of normal septation. This is Probable GTP-binding protein EngB from Francisella tularensis subsp. holarctica (strain FTNF002-00 / FTA).